Here is a 318-residue protein sequence, read N- to C-terminus: NADH-ubiquinone oxidoreductase chain 1 (318 aa).

A run of 8 helical transmembrane segments spans residues 2 to 22 (FMIN…FLTL), 69 to 89 (FMFT…WVPL), 102 to 122 (MLFI…SGWA), 146 to 166 (LAII…STLT), 171 to 191 (HLWL…STLA), 231 to 251 (IIMM…NPLL), 253 to 273 (EAHT…FLWV), and 294 to 314 (LPLT…LACI).

The protein belongs to the complex I subunit 1 family. As to quaternary structure, core subunit of respiratory chain NADH dehydrogenase (Complex I) which is composed of 45 different subunits.

The protein resides in the mitochondrion inner membrane. The catalysed reaction is a ubiquinone + NADH + 5 H(+)(in) = a ubiquinol + NAD(+) + 4 H(+)(out). Its function is as follows. Core subunit of the mitochondrial membrane respiratory chain NADH dehydrogenase (Complex I) which catalyzes electron transfer from NADH through the respiratory chain, using ubiquinone as an electron acceptor. Essential for the catalytic activity and assembly of complex I. The chain is NADH-ubiquinone oxidoreductase chain 1 (MT-ND1) from Dugong dugon (Dugong).